The primary structure comprises 123 residues: Small ribosomal subunit protein uS12 (123 aa).

Asp-89 carries the 3-methylthioaspartic acid modification.

The protein belongs to the universal ribosomal protein uS12 family. In terms of assembly, part of the 30S ribosomal subunit. Contacts proteins S8 and S17. May interact with IF1 in the 30S initiation complex.

With S4 and S5 plays an important role in translational accuracy. Functionally, interacts with and stabilizes bases of the 16S rRNA that are involved in tRNA selection in the A site and with the mRNA backbone. Located at the interface of the 30S and 50S subunits, it traverses the body of the 30S subunit contacting proteins on the other side and probably holding the rRNA structure together. The combined cluster of proteins S8, S12 and S17 appears to hold together the shoulder and platform of the 30S subunit. The protein is Small ribosomal subunit protein uS12 of Desulfovibrio desulfuricans (strain ATCC 27774 / DSM 6949 / MB).